Consider the following 222-residue polypeptide: uncharacterized protein (222 aa).

A run of 7 helical transmembrane segments spans residues 26–46 (YGLL…SQQM), 48–68 (LPYP…FLTV), 75–95 (WGLV…GPIL), 107–127 (VITS…AYVL), 139–159 (FITA…FFQI), 166–186 (ISAG…SAII), and 198–218 (ISLY…FGIA).

Belongs to the BI1 family.

Its subcellular location is the cell membrane. This is an uncharacterized protein from Pseudomonas aeruginosa (strain ATCC 15692 / DSM 22644 / CIP 104116 / JCM 14847 / LMG 12228 / 1C / PRS 101 / PAO1).